A 752-amino-acid polypeptide reads, in one-letter code: Ribosomal protein S6 kinase 2 alpha (752 aa).

Residues 80–339 (FELLKVLGQG…AEEIKRHPFY (260 aa)) enclose the Protein kinase 1 domain. ATP contacts are provided by residues 86 to 94 (LGQGSFGKV) and lysine 112. Aspartate 205 acts as the Proton acceptor in catalysis. A Phosphoserine modification is found at serine 239. Positions 340-409 (STIDWNKLYR…VATGLMEDSK (70 aa)) constitute an AGC-kinase C-terminal domain. Position 377 is a phosphothreonine (threonine 377). Serine 381 carries the phosphoserine modification. Serine 398 is modified (phosphoserine; by autocatalysis). Residues 435-692 (YVVKEAIGVG…AKQVLQHPWI (258 aa)) enclose the Protein kinase 2 domain. Residues 441–449 (IGVGSYSVC) and lysine 464 contribute to the ATP site. Catalysis depends on aspartate 552, which acts as the Proton acceptor. Threonine 590 is modified (phosphothreonine). The residue at position 749 (serine 749) is a Phosphoserine.

It belongs to the protein kinase superfamily. AGC Ser/Thr protein kinase family. S6 kinase subfamily. Mg(2+) is required as a cofactor. Post-translationally, autophosphorylated on Ser-398, as part of the activation process. In terms of tissue distribution, small and large intestine, spleen, stomach, and bursa, and to a lesser extent lung and kidney.

The enzyme catalyses L-seryl-[protein] + ATP = O-phospho-L-seryl-[protein] + ADP + H(+). The catalysed reaction is L-threonyl-[protein] + ATP = O-phospho-L-threonyl-[protein] + ADP + H(+). With respect to regulation, activated by multiple phosphorylations on threonine and serine residues. Serine/threonine kinase that may play a role in mediating the growth-factor and stress induced activation of transcription. In Gallus gallus (Chicken), this protein is Ribosomal protein S6 kinase 2 alpha (RPS6KA).